A 465-amino-acid chain; its full sequence is Uronate isomerase (465 aa).

The protein belongs to the metallo-dependent hydrolases superfamily. Uronate isomerase family.

It catalyses the reaction D-glucuronate = D-fructuronate. The catalysed reaction is aldehydo-D-galacturonate = keto-D-tagaturonate. The protein operates within carbohydrate metabolism; pentose and glucuronate interconversion. The polypeptide is Uronate isomerase (Streptococcus equi subsp. zooepidemicus (strain MGCS10565)).